The primary structure comprises 402 residues: Lipid-A-disaccharide synthase (402 aa).

This sequence belongs to the LpxB family.

It catalyses the reaction a lipid X + a UDP-2-N,3-O-bis[(3R)-3-hydroxyacyl]-alpha-D-glucosamine = a lipid A disaccharide + UDP + H(+). Its pathway is bacterial outer membrane biogenesis; LPS lipid A biosynthesis. In terms of biological role, condensation of UDP-2,3-diacylglucosamine and 2,3-diacylglucosamine-1-phosphate to form lipid A disaccharide, a precursor of lipid A, a phosphorylated glycolipid that anchors the lipopolysaccharide to the outer membrane of the cell. The protein is Lipid-A-disaccharide synthase of Cupriavidus pinatubonensis (strain JMP 134 / LMG 1197) (Cupriavidus necator (strain JMP 134)).